Reading from the N-terminus, the 193-residue chain is Molybdopterin synthase catalytic subunit (193 aa).

Substrate is bound by residues 118–119, K134, and 141–143; these read HR and KKE. Residues 159 to 193 form a disordered region; sequence DRTTTDGTTASSPAPATRPAKGGGCCGSKVRANES. Residues 163 to 178 show a composition bias toward low complexity; that stretch reads TDGTTASSPAPATRPA.

It belongs to the MoaE family. MOCS2B subfamily. In terms of assembly, heterotetramer; composed of 2 small (MOCS2A) and 2 large (MOCS2B) subunits.

Its subcellular location is the cytoplasm. It catalyses the reaction 2 [molybdopterin-synthase sulfur-carrier protein]-C-terminal-Gly-aminoethanethioate + cyclic pyranopterin phosphate + H2O = molybdopterin + 2 [molybdopterin-synthase sulfur-carrier protein]-C-terminal Gly-Gly + 2 H(+). The protein operates within cofactor biosynthesis; molybdopterin biosynthesis. Catalytic subunit of the molybdopterin synthase complex, a complex that catalyzes the conversion of precursor Z into molybdopterin. Acts by mediating the incorporation of 2 sulfur atoms from thiocarboxylated MOCS2A into precursor Z to generate a dithiolene group. This Oryza sativa subsp. indica (Rice) protein is Molybdopterin synthase catalytic subunit.